Consider the following 502-residue polypeptide: Hippocampus abundant transcript-like protein 1 (502 aa).

Over residues 1–12 the composition is skewed to basic and acidic residues; it reads MNAEPPEEKAAS. Positions 1-27 are disordered; it reads MNAEPPEEKAASEAEAGAMPEKRAGSR. At 1–46 the chain is on the extracellular side; the sequence is MNAEPPEEKAASEAEAGAMPEKRAGSRAAGGNSLQGFGRPSVYHAA. A helical membrane pass occupies residues 47 to 67; it reads IVIFLEFFAWGLLTTSMLTVL. Residues 68-79 lie on the Cytoplasmic side of the membrane; that stretch reads HETFPQHTFLMN. Residues 80 to 100 form a helical membrane-spanning segment; that stretch reads GLIQGVKGLLSFLSAPLIGAL. Topologically, residues 101 to 108 are extracellular; the sequence is SDVWGRKP. Residues 109 to 129 traverse the membrane as a helical segment; that stretch reads FLLGTVFFTCFPIPLMRISPW. Topologically, residues 130-131 are cytoplasmic; sequence WY. The helical transmembrane segment at 132 to 152 threads the bilayer; the sequence is FAMISISGVFSVTFSVIFAYV. The Extracellular portion of the chain corresponds to 153–165; sequence ADVTQEHERSTAY. Residues 166-186 form a helical membrane-spanning segment; it reads GWVSATFAASLVSSPAIGAYL. Residues 187-193 are Cytoplasmic-facing; sequence SASYGDS. Residues 194-214 form a helical membrane-spanning segment; sequence LVVLVATVVALLDICFILLAV. Residues 215 to 248 lie on the Extracellular side of the membrane; the sequence is PESLPEKMRPLSWGARISWKQADPFASLKKVGKD. A helical membrane pass occupies residues 249–269; the sequence is STILLICITVFLSYLPEAGQY. Residues 270 to 278 are Cytoplasmic-facing; that stretch reads SSFFLYLRQ. Residues 279–299 form a helical membrane-spanning segment; it reads VIGFGSIKIAAFIAMVGILSI. At 300 to 316 the chain is on the extracellular side; sequence VAQTVFLTSLMRSLGNK. A helical transmembrane segment spans residues 317–337; that stretch reads NTVLLGLGFQMFQLAWYGFGS. A topological domain (cytoplasmic) is located at residue Q338. Residues 339–359 traverse the membrane as a helical segment; it reads AWMMWAAGIVAAVSSITFPAV. Residues 360 to 384 lie on the Extracellular side of the membrane; the sequence is STLVSQNADSNQQGVAQGIITGIRG. The chain crosses the membrane as a helical span at residues 385 to 405; that stretch reads LCNGLGPALYGFIFYMFHVEL. Residues 406-425 are Cytoplasmic-facing; that stretch reads TELEPELISNNAALQGAVIP. The chain crosses the membrane as a helical span at residues 426–446; it reads GPPFLFGACIVFMSFLVAVFI. Topologically, residues 447 to 502 are extracellular; sequence PEYSKGGIQKHSNSISGSLANTPERGSDEDIEPLLQDSSIWELSSLEEPGHQCTEL.

The protein belongs to the major facilitator superfamily.

It localises to the membrane. The polypeptide is Hippocampus abundant transcript-like protein 1 (Bos taurus (Bovine)).